The following is a 588-amino-acid chain: Adenine deaminase (588 aa).

It belongs to the metallo-dependent hydrolases superfamily. Adenine deaminase family. As to quaternary structure, homodimer. Mn(2+) serves as cofactor.

The catalysed reaction is adenine + H2O + H(+) = hypoxanthine + NH4(+). The protein is Adenine deaminase of Shigella flexneri.